Here is a 150-residue protein sequence, read N- to C-terminus: D-aminoacyl-tRNA deacylase (150 aa).

The Gly-cisPro motif, important for rejection of L-amino acids signature appears at 138–139 (GP).

This sequence belongs to the DTD family. As to quaternary structure, homodimer.

It localises to the cytoplasm. The enzyme catalyses glycyl-tRNA(Ala) + H2O = tRNA(Ala) + glycine + H(+). The catalysed reaction is a D-aminoacyl-tRNA + H2O = a tRNA + a D-alpha-amino acid + H(+). Functionally, an aminoacyl-tRNA editing enzyme that deacylates mischarged D-aminoacyl-tRNAs. Also deacylates mischarged glycyl-tRNA(Ala), protecting cells against glycine mischarging by AlaRS. Acts via tRNA-based rather than protein-based catalysis; rejects L-amino acids rather than detecting D-amino acids in the active site. By recycling D-aminoacyl-tRNA to D-amino acids and free tRNA molecules, this enzyme counteracts the toxicity associated with the formation of D-aminoacyl-tRNA entities in vivo and helps enforce protein L-homochirality. This chain is D-aminoacyl-tRNA deacylase, found in Phocaeicola vulgatus (strain ATCC 8482 / DSM 1447 / JCM 5826 / CCUG 4940 / NBRC 14291 / NCTC 11154) (Bacteroides vulgatus).